A 399-amino-acid chain; its full sequence is CCA-adding enzyme (399 aa).

Residues Gly32 and Arg35 each contribute to the ATP site. Residues Gly32 and Arg35 each coordinate CTP. Asp45 and Asp47 together coordinate Mg(2+). Residues Arg116, Asp159, Arg162, Arg165, and Arg168 each contribute to the ATP site. Arg116, Asp159, Arg162, Arg165, and Arg168 together coordinate CTP.

It belongs to the tRNA nucleotidyltransferase/poly(A) polymerase family. Bacterial CCA-adding enzyme type 3 subfamily. In terms of assembly, homodimer. The cofactor is Mg(2+).

It catalyses the reaction a tRNA precursor + 2 CTP + ATP = a tRNA with a 3' CCA end + 3 diphosphate. It carries out the reaction a tRNA with a 3' CCA end + 2 CTP + ATP = a tRNA with a 3' CCACCA end + 3 diphosphate. Catalyzes the addition and repair of the essential 3'-terminal CCA sequence in tRNAs without using a nucleic acid template. Adds these three nucleotides in the order of C, C, and A to the tRNA nucleotide-73, using CTP and ATP as substrates and producing inorganic pyrophosphate. tRNA 3'-terminal CCA addition is required both for tRNA processing and repair. Also involved in tRNA surveillance by mediating tandem CCA addition to generate a CCACCA at the 3' terminus of unstable tRNAs. While stable tRNAs receive only 3'-terminal CCA, unstable tRNAs are marked with CCACCA and rapidly degraded. In Streptococcus pneumoniae (strain CGSP14), this protein is CCA-adding enzyme.